The sequence spans 483 residues: Glutamyl-tRNA(Gln) amidotransferase subunit A (483 aa).

Catalysis depends on charge relay system residues K76 and S151. The active-site Acyl-ester intermediate is S175.

It belongs to the amidase family. GatA subfamily. Heterotrimer of A, B and C subunits.

The catalysed reaction is L-glutamyl-tRNA(Gln) + L-glutamine + ATP + H2O = L-glutaminyl-tRNA(Gln) + L-glutamate + ADP + phosphate + H(+). Functionally, allows the formation of correctly charged Gln-tRNA(Gln) through the transamidation of misacylated Glu-tRNA(Gln) in organisms which lack glutaminyl-tRNA synthetase. The reaction takes place in the presence of glutamine and ATP through an activated gamma-phospho-Glu-tRNA(Gln). This chain is Glutamyl-tRNA(Gln) amidotransferase subunit A, found in Azotobacter vinelandii (strain DJ / ATCC BAA-1303).